The following is a 129-amino-acid chain: Large ribosomal subunit protein bL12 (129 aa).

It belongs to the bacterial ribosomal protein bL12 family. As to quaternary structure, homodimer. Part of the ribosomal stalk of the 50S ribosomal subunit. Forms a multimeric L10(L12)X complex, where L10 forms an elongated spine to which 2 to 4 L12 dimers bind in a sequential fashion. Binds GTP-bound translation factors.

Forms part of the ribosomal stalk which helps the ribosome interact with GTP-bound translation factors. Is thus essential for accurate translation. The chain is Large ribosomal subunit protein bL12 from Synechococcus sp. (strain CC9605).